The primary structure comprises 361 residues: Tyrosine--tRNA ligase (361 aa).

L-tyrosine contacts are provided by Tyr-36, Tyr-162, Gln-166, Asp-169, and Gln-184. The 'KMSKS' region signature appears at 236–240 (KMSKS). Lys-239 is an ATP binding site.

This sequence belongs to the class-I aminoacyl-tRNA synthetase family. TyrS type 4 subfamily. Homodimer.

It localises to the cytoplasm. It carries out the reaction tRNA(Tyr) + L-tyrosine + ATP = L-tyrosyl-tRNA(Tyr) + AMP + diphosphate + H(+). In terms of biological role, catalyzes the attachment of tyrosine to tRNA(Tyr) in a two-step reaction: tyrosine is first activated by ATP to form Tyr-AMP and then transferred to the acceptor end of tRNA(Tyr). The polypeptide is Tyrosine--tRNA ligase (Saccharolobus islandicus (strain L.S.2.15 / Lassen #1) (Sulfolobus islandicus)).